The following is a 357-amino-acid chain: S-adenosylmethionine:tRNA ribosyltransferase-isomerase (357 aa).

It belongs to the QueA family. Monomer.

It localises to the cytoplasm. The catalysed reaction is 7-aminomethyl-7-carbaguanosine(34) in tRNA + S-adenosyl-L-methionine = epoxyqueuosine(34) in tRNA + adenine + L-methionine + 2 H(+). It participates in tRNA modification; tRNA-queuosine biosynthesis. Functionally, transfers and isomerizes the ribose moiety from AdoMet to the 7-aminomethyl group of 7-deazaguanine (preQ1-tRNA) to give epoxyqueuosine (oQ-tRNA). In Buchnera aphidicola subsp. Acyrthosiphon pisum (strain APS) (Acyrthosiphon pisum symbiotic bacterium), this protein is S-adenosylmethionine:tRNA ribosyltransferase-isomerase.